An 81-amino-acid chain; its full sequence is Penaeidin-3c (81 aa).

Positions Met1–Gly19 are cleaved as a signal peptide. Gln20 carries the pyrrolidone carboxylic acid modification. Intrachain disulfides connect Cys50–Cys65, Cys54–Cys72, and Cys66–Cys73. Ser80 carries the serine amide modification.

Belongs to the penaeidin family. As to expression, higher expression in hemocytes and to a lesser extent in heart, testis, gills, intestine, lymphoid organ and hepatopancreas. Traces in eyes and subcuticular epithelium. Not present in the brain.

The protein localises to the cytoplasmic granule. In terms of biological role, antibacterial activity against M.luteus and E.coli bacteria. Antifungal activity against N.crassa and F.oxysporum. Presents chitin-binding activity. This is Penaeidin-3c from Penaeus vannamei (Whiteleg shrimp).